The chain runs to 412 residues: Protein ALF (412 aa).

2 disordered regions span residues 1–47 (MDPE…PLPP) and 154–234 (GLSE…GISE). The span at 31-47 (PPQPPPPPLPPPQPLPP) shows a compositional bias: pro residues. Residues 187–196 (MRQRRRKKVV) show a composition bias toward basic residues. Residues 206–221 (MEEDEDTEEGQEDNED) show a composition bias toward acidic residues. 3 consecutive DNA-binding regions follow at residues 237–241 (REHPF), 306–313 (NKPKMRHY), and 377–380 (YVPT).

This sequence belongs to the FLO/LFY family. In terms of tissue distribution, expressed in the floral meristem and also in the vegetative meristem.

The protein localises to the nucleus. Its function is as follows. Probable transcription factor required for the specification of floral meristem identity. The protein is Protein ALF (ALF) of Petunia hybrida (Petunia).